A 224-amino-acid chain; its full sequence is Cysteine S-methyltransferase NleE (224 aa).

Residues 49–52 (GITR) form an interaction with host proteins TAB2, TAB3 and ZRANB3 region. S-adenosyl-L-methionine is bound by residues Ala-92, Ser-98, Arg-107, Gln-111, Tyr-204, and Glu-208.

It belongs to the NleE/OspZ family. Monomer.

Its subcellular location is the secreted. It localises to the host nucleus. It carries out the reaction L-cysteinyl-[protein] + S-adenosyl-L-methionine = S-methyl-L-cysteinyl-[protein] + S-adenosyl-L-homocysteine + H(+). Functionally, cysteine methyltransferase effector that inhibits host cell NF-kappa-B activation by preventing nuclear translocation of host protein RELA/p65. Acts by mediating cysteine methylation of host proteins TAB2 and TAB3: methylation of a conserved cysteine residue of the RanBP2-type zinc finger (NZF) of TAB2 and TAB3 disrupts zinc-binding, thereby inactivating the ubiquitin chain-binding activity of TAB2 and TAB3, leading to NF-kappa-B inactivation. Also mediates cysteine methylation of host protein ZRANB3, inactivating its ability to bind ubiquitin chains. The protein is Cysteine S-methyltransferase NleE of Escherichia coli O127:H6 (strain E2348/69 / EPEC).